A 233-amino-acid polypeptide reads, in one-letter code: Large ribosomal subunit protein eL6z (233 aa).

The interval 175–195 (EFFEAEKEEKKEIPQEKKEDQ) is disordered.

This sequence belongs to the eukaryotic ribosomal protein eL6 family.

This is Large ribosomal subunit protein eL6z (RPL6A) from Arabidopsis thaliana (Mouse-ear cress).